The chain runs to 159 residues: Bacterial non-heme ferritin (159 aa).

A Ferritin-like diiron domain is found at 1–145 (MISEKLQNAI…GIVDKIKRAG (145 aa)). Residues glutamate 17, glutamate 50, histidine 53, glutamate 94, and glutamine 127 each contribute to the Fe cation site.

It belongs to the ferritin family. Prokaryotic subfamily. As to quaternary structure, homooligomer of 24 subunits that assemble into a spherical protein shell (12 +/- 1 nM diameter) that can sequester at least 2000 iron atoms.

The catalysed reaction is 4 Fe(2+) + O2 + 6 H2O = 4 iron(III) oxide-hydroxide + 12 H(+). Its function is as follows. May alleviate iron toxicity in the presence of oxygen. This chain is Bacterial non-heme ferritin (ftnA), found in Bacteroides fragilis (strain 638R).